The primary structure comprises 202 residues: Nigerythrin (202 aa).

The 146-residue stretch at 23–168 (KTAVGSTLEN…AYNDIDAPDD (146 aa)) folds into the Ferritin-like diiron domain. 10 residues coordinate Fe cation: glutamate 40, glutamate 73, glutamate 115, glutamate 118, glutamate 149, histidine 152, cysteine 174, cysteine 177, cysteine 189, and cysteine 192. The Rubredoxin-like domain occupies 169–202 (DKFHLCPICGYIHKGEDFEKCPICFRPKDTFTAY).

In terms of assembly, homodimer. May possess two rubredoxin-like centers and two hemerythrin-like binuclear-iron centers per dimer.

Its subcellular location is the cytoplasm. Its function is as follows. Exhibits NADH peroxidase activity (in vitro). In Nitratidesulfovibrio vulgaris (strain ATCC 29579 / DSM 644 / CCUG 34227 / NCIMB 8303 / VKM B-1760 / Hildenborough) (Desulfovibrio vulgaris), this protein is Nigerythrin (ngr).